Reading from the N-terminus, the 209-residue chain is Methylated-DNA--protein-cysteine methyltransferase (209 aa).

Zn(2+) is bound at residue cysteine 5. The residue at position 14 (serine 14) is a Phosphoserine. Residues cysteine 24, histidine 29, and histidine 89 each contribute to the Zn(2+) site. Positions 99, 118, 119, 127, and 132 each coordinate DNA. Residue cysteine 149 is the Nucleophile; methyl group acceptor of the active site. Residue serine 155 coordinates DNA.

This sequence belongs to the MGMT family. The cofactor is Zn(2+).

It localises to the nucleus. It catalyses the reaction a 6-O-methyl-2'-deoxyguanosine in DNA + L-cysteinyl-[protein] = S-methyl-L-cysteinyl-[protein] + a 2'-deoxyguanosine in DNA. The catalysed reaction is a 4-O-methyl-thymidine in DNA + L-cysteinyl-[protein] = a thymidine in DNA + S-methyl-L-cysteinyl-[protein]. Its function is as follows. Involved in the cellular defense against the biological effects of O6-methylguanine (O6-MeG) and O4-methylthymine (O4-MeT) in DNA. Repairs the methylated nucleobase in DNA by stoichiometrically transferring the methyl group to a cysteine residue in the enzyme. This is a suicide reaction: the enzyme is irreversibly inactivated. The polypeptide is Methylated-DNA--protein-cysteine methyltransferase (Mgmt) (Rattus norvegicus (Rat)).